The sequence spans 273 residues: 5-deoxy-glucuronate isomerase (273 aa).

This sequence belongs to the isomerase IolB family.

The enzyme catalyses 5-deoxy-D-glucuronate = 5-dehydro-2-deoxy-D-gluconate. Its pathway is polyol metabolism; myo-inositol degradation into acetyl-CoA; acetyl-CoA from myo-inositol: step 4/7. In terms of biological role, involved in the isomerization of 5-deoxy-glucuronate (5DG) to 5-dehydro-2-deoxy-D-gluconate (DKG or 2-deoxy-5-keto-D-gluconate). The sequence is that of 5-deoxy-glucuronate isomerase from Listeria monocytogenes serotype 4a (strain HCC23).